Here is a 372-residue protein sequence, read N- to C-terminus: tRNA-specific 2-thiouridylase MnmA (372 aa).

Residues 11 to 18 (GLSGGVDS) and M36 contribute to the ATP site. The interaction with target base in tRNA stretch occupies residues 106 to 108 (NPD). C111 serves as the catalytic Nucleophile. Residues C111 and C204 are joined by a disulfide bond. G136 is a binding site for ATP. An interaction with tRNA region spans residues 154–156 (KDQ). Catalysis depends on C204, which acts as the Cysteine persulfide intermediate. Residues 311–312 (RY) are interaction with tRNA.

This sequence belongs to the MnmA/TRMU family.

The protein localises to the cytoplasm. The enzyme catalyses S-sulfanyl-L-cysteinyl-[protein] + uridine(34) in tRNA + AH2 + ATP = 2-thiouridine(34) in tRNA + L-cysteinyl-[protein] + A + AMP + diphosphate + H(+). Catalyzes the 2-thiolation of uridine at the wobble position (U34) of tRNA, leading to the formation of s(2)U34. The protein is tRNA-specific 2-thiouridylase MnmA of Mycoplasmopsis synoviae (strain 53) (Mycoplasma synoviae).